We begin with the raw amino-acid sequence, 189 residues long: Prostaglandin-H2 D-isomerase (189 aa).

Positions 1–24 (MAALRMLWMGLVLLGLLGFPQTPA) are cleaved as a signal peptide. Gln25 is subject to Pyrrolidone carboxylic acid. Residue Asn51 is glycosylated (N-linked (GlcNAc...) asparagine). Residue Cys65 is the Nucleophile of the active site. A glycan (N-linked (GlcNAc...) asparagine) is linked at Asn78. A disulfide bond links Cys89 and Cys186.

It belongs to the calycin superfamily. Lipocalin family. Monomer. As to expression, abundant in the brain and CNS, where it is expressed in tissues of the blood-brain barrier and secreted into the cerebro-spinal fluid. In the male reproductive system, it is expressed in the testis, efferent ducts and epididymis, and is secreted into the seminal fluid. In the eye, it is expressed in the pigmented epithelium of the retina and the nonpigmented epithelium of the ciliary body, and secreted into the aqueous humor. Low levels detected in various tissue fluids such as serum, normal urine, ascitic fluid and tear fluid. Also found in a number of other organs including the ear, heart and lung.

Its subcellular location is the rough endoplasmic reticulum. The protein localises to the nucleus membrane. It is found in the golgi apparatus. It localises to the cytoplasm. The protein resides in the perinuclear region. Its subcellular location is the secreted. The catalysed reaction is prostaglandin H2 = prostaglandin D2. Functionally, catalyzes the conversion of PGH2 to PGD2, a prostaglandin involved in smooth muscle contraction/relaxation and a potent inhibitor of platelet aggregation. Involved in a variety of CNS functions, such as sedation, NREM sleep and PGE2-induced allodynia, and may have an anti-apoptotic role in oligodendrocytes. Binds small non-substrate lipophilic molecules, including biliverdin, bilirubin, retinal, retinoic acid and thyroid hormone, and may act as a scavenger for harmful hydrophobic molecules and as a secretory retinoid and thyroid hormone transporter. Possibly involved in development and maintenance of the blood-brain, blood-retina, blood-aqueous humor and blood-testis barrier. It is likely to play important roles in both maturation and maintenance of the central nervous system and male reproductive system. Involved in PLA2G3-dependent maturation of mast cells. PLA2G3 is secreted by immature mast cells and acts on nearby fibroblasts upstream to PTDGS to synthesize PGD2, which in turn promotes mast cell maturation and degranulation via PTGDR. The protein is Prostaglandin-H2 D-isomerase (Ptgds) of Mus musculus (Mouse).